Reading from the N-terminus, the 550-residue chain is Thioredoxin domain-containing protein 2 (550 aa).

The interval 1–50 is disordered; it reads MFKKNQKLSKDKGLEVNSVQAGAPEESDVKLNNGGKANERGSNEFLDTAQ. 2 positions are modified to phosphoserine: S42 and S51. Residues 63 to 428 form a disordered region; sequence MLHMSTEESE…IKSSEDVQPS (366 aa). 3 stretches are compositionally biased toward polar residues: residues 73 to 87, 96 to 105, and 112 to 140; these read PPQQ…SENT, PKSSTKNTQL, and KTSS…QGST. Repeat copies occupy residues 104–118, 119–133, 134–148, 149–163, 164–178, 179–193, 194–208, 209–223, 224–238, 239–252, 253–267, 268–282, 283–297, 298–312, 313–327, 328–342, 343–357, 358–384, 385–399, 400–412, 413–425, and 426–440. The tract at residues 104-440 is 22 X 15 AA approximate tandem repeat of Q-P-K-X-G-D-I-P-K-S-[PS]-E-[KE]-X-I; it reads QLKQEDISKT…EIFPFEAEIE (337 aa). Basic and acidic residues-rich tracts occupy residues 148 to 205, 217 to 259, 277 to 304, and 313 to 348; these read THDR…KSLE, KSSE…ESET, QVKD…ENKI, and QPKE…KEEI. A Phosphoserine modification is found at S158. Residues S351 and S379 each carry the phosphoserine modification. The Thioredoxin domain occupies 401 to 550; it reads KEEITVSPED…KLEKSIAELK (150 aa). A Phosphoserine modification is found at S407. A disulfide bridge connects residues C477 and C480.

In terms of tissue distribution, testis-specific. Strongly expressed in the testicular seminiferous tubules, mostly in the round spermatids.

It localises to the cytoplasm. Its function is as follows. Probably plays a regulatory role in sperm development. May participate in regulation of fibrous sheath (FS) assembly by supporting the formation of disulfide bonds during sperm tail morphogenesis. May also be required to rectify incorrect disulfide pairing and generate suitable pairs between the FS constituents. Can reduce disulfide bonds in vitro in the presence of NADP and thioredoxin reductase. The polypeptide is Thioredoxin domain-containing protein 2 (Txndc2) (Rattus norvegicus (Rat)).